A 224-amino-acid polypeptide reads, in one-letter code: uncharacterized protein (224 aa).

The next 5 helical transmembrane spans lie at 32-52, 60-80, 100-120, 130-150, and 162-182; these read ILTL…PLVV, LFTN…IYFF, IIYL…SGLG, AIAY…LFGF, and LGFS…FGII.

This sequence belongs to the derlin family.

It is found in the endoplasmic reticulum membrane. This is an uncharacterized protein from Schizosaccharomyces pombe (strain 972 / ATCC 24843) (Fission yeast).